The primary structure comprises 720 residues: Armadillo repeat-containing protein 8 (720 aa).

14 ARM repeats span residues N51–M92, E95–T134, T138–K176, P178–F217, M224–R265, I269–E309, E313–Q352, D421–R460, Q463–L502, S505–F544, Q548–S587, P590–D632, T635–W674, and Q681–A720.

As to quaternary structure, identified in the CTLH complex that contains at least MAEA, RMND5A (or alternatively its paralog RMND5B), GID8, WDR26, and RANBP9 and/or RANBP10; ARMC8 has an ancillary role in the complex.

The protein localises to the nucleus. It localises to the cytoplasm. Component of the CTLH E3 ubiquitin-protein ligase complex that mediates ubiquitination and subsequent proteasomal degradation of target proteins. This chain is Armadillo repeat-containing protein 8 (armc8), found in Xenopus laevis (African clawed frog).